The sequence spans 322 residues: MSDVRNVIIIGSGPAGYTAALYTARASLQPLVFEGAVTAGGALMNTTDVENFPGFRDGIMGPDLMDNMRAQAERFGAELIPDDVVSVDLTGDIKTVTDSAGTVHRAKAVIVTTGSQHRKLGLPREDALSGRGVSWCATCDGFFFKDQDIVVVGGGDTAMEEATFLSRFAKSVTIVHRRDSLRASKAMQDRAFADPKISFAWNSEVATIHGEQKLTGLTLRDTKTGETRELAATGLFIAVGHDPRTELFKGQLDLDDEGYLKVASPSTRTNLTGVFAAGDVVDHTYRQAITAAGTGCSAALDAERYLAALADSEQIAEPAPAV.

FAD contacts are provided by residues 12–15 (SGPA), 34–42 (EGAVTAGGA), asparagine 51, and valine 84. A disulfide bridge connects residues cysteine 136 and cysteine 139. 3 residues coordinate NADP(+): histidine 176, arginine 182, and tyrosine 259. Residues aspartate 279 and 286-289 (RQAI) each bind FAD. NADP(+) is bound at residue arginine 286.

The protein belongs to the class-II pyridine nucleotide-disulfide oxidoreductase family. In terms of assembly, homodimer. The cofactor is FAD.

It catalyses the reaction [thioredoxin]-dithiol + NADP(+) = [thioredoxin]-disulfide + NADPH + H(+). Its function is as follows. Component of the thioredoxin-thioredoxin reductase system which may be involved in biosynthesis of penicillins and cephalosporins and may be important in determining the thiol-disulfide redox balance. In Streptomyces clavuligerus, this protein is Thioredoxin reductase.